A 340-amino-acid polypeptide reads, in one-letter code: Phosphate acyltransferase (340 aa).

It belongs to the PlsX family. Homodimer. Probably interacts with PlsY.

It localises to the cytoplasm. It carries out the reaction a fatty acyl-[ACP] + phosphate = an acyl phosphate + holo-[ACP]. Its pathway is lipid metabolism; phospholipid metabolism. Functionally, catalyzes the reversible formation of acyl-phosphate (acyl-PO(4)) from acyl-[acyl-carrier-protein] (acyl-ACP). This enzyme utilizes acyl-ACP as fatty acyl donor, but not acyl-CoA. The chain is Phosphate acyltransferase from Clostridioides difficile (strain 630) (Peptoclostridium difficile).